A 431-amino-acid polypeptide reads, in one-letter code: Adenylosuccinate lyase (431 aa).

Residues 4-5 (RY), 67-69 (RHD), and 93-94 (TS) each bind N(6)-(1,2-dicarboxyethyl)-AMP. The active-site Proton donor/acceptor is the His-141. Residue Gln-212 participates in N(6)-(1,2-dicarboxyethyl)-AMP binding. Catalysis depends on Ser-262, which acts as the Proton donor/acceptor. N(6)-(1,2-dicarboxyethyl)-AMP is bound by residues Ser-263, 268-270 (KRN), and 307-311 (SVERV).

This sequence belongs to the lyase 1 family. Adenylosuccinate lyase subfamily. As to quaternary structure, homooligomer. Residues from neighboring subunits contribute catalytic and substrate-binding residues to each active site.

The catalysed reaction is N(6)-(1,2-dicarboxyethyl)-AMP = fumarate + AMP. It carries out the reaction (2S)-2-[5-amino-1-(5-phospho-beta-D-ribosyl)imidazole-4-carboxamido]succinate = 5-amino-1-(5-phospho-beta-D-ribosyl)imidazole-4-carboxamide + fumarate. It participates in purine metabolism; AMP biosynthesis via de novo pathway; AMP from IMP: step 2/2. It functions in the pathway purine metabolism; IMP biosynthesis via de novo pathway; 5-amino-1-(5-phospho-D-ribosyl)imidazole-4-carboxamide from 5-amino-1-(5-phospho-D-ribosyl)imidazole-4-carboxylate: step 2/2. In terms of biological role, catalyzes two reactions in de novo purine nucleotide biosynthesis. Catalyzes the breakdown of 5-aminoimidazole- (N-succinylocarboxamide) ribotide (SAICAR or 2-[5-amino-1-(5-phospho-beta-D-ribosyl)imidazole-4-carboxamido]succinate) to 5-aminoimidazole-4-carboxamide ribotide (AICAR or 5-amino-1-(5-phospho-beta-D-ribosyl)imidazole-4-carboxamide) and fumarate, and of adenylosuccinate (ADS or N(6)-(1,2-dicarboxyethyl)-AMP) to adenosine monophosphate (AMP) and fumarate. The protein is Adenylosuccinate lyase (purB) of Synechocystis sp. (strain ATCC 27184 / PCC 6803 / Kazusa).